A 507-amino-acid polypeptide reads, in one-letter code: TOM1-like protein 2 (507 aa).

One can recognise a VHS domain in the interval 20-152 (ATDGSLQSED…ELKRKGVEFP (133 aa)). Serine 160 bears the Phosphoserine mark. The segment at 162-210 (IHTPQRSVPEVDPAATMPRSQSQQRTSAGSYSSPPPAPYSAPQAPALSV) is disordered. The residue at position 164 (threonine 164) is a Phosphothreonine. The 89-residue stretch at 219–307 (EQIARLRSEL…VFLRYERFER (89 aa)) folds into the GAT domain. Residues 329–334 (NLIDLG) carry the Clathrin-binding motif. Positions 467–507 (RAKAAEMVPDLPSPPMEAPAPASNPSGRKKPERSEDALFAL) are disordered. Positions 498–507 (ERSEDALFAL) are enriched in basic and acidic residues.

It belongs to the TOM1 family. Interacts with clathrin, SRC and TOLLIP. Interacts with MYO6. As to expression, ubiquitously expressed with higher expression in heart and skeletal muscle.

Functionally, acts as a MYO6/Myosin VI adapter protein that targets myosin VI to endocytic structures. May also play a role in recruiting clathrin to endosomes. May regulate growth factor-induced mitogenic signaling. This chain is TOM1-like protein 2 (TOM1L2), found in Homo sapiens (Human).